We begin with the raw amino-acid sequence, 298 residues long: 4-hydroxy-tetrahydrodipicolinate synthase (298 aa).

Position 51 (threonine 51) interacts with pyruvate. Tyrosine 139 (proton donor/acceptor) is an active-site residue. The active-site Schiff-base intermediate with substrate is lysine 167. Isoleucine 209 contributes to the pyruvate binding site.

The protein belongs to the DapA family. Homotetramer; dimer of dimers.

The protein resides in the cytoplasm. It carries out the reaction L-aspartate 4-semialdehyde + pyruvate = (2S,4S)-4-hydroxy-2,3,4,5-tetrahydrodipicolinate + H2O + H(+). It functions in the pathway amino-acid biosynthesis; L-lysine biosynthesis via DAP pathway; (S)-tetrahydrodipicolinate from L-aspartate: step 3/4. In terms of biological role, catalyzes the condensation of (S)-aspartate-beta-semialdehyde [(S)-ASA] and pyruvate to 4-hydroxy-tetrahydrodipicolinate (HTPA). This Histophilus somni (strain 2336) (Haemophilus somnus) protein is 4-hydroxy-tetrahydrodipicolinate synthase.